The primary structure comprises 347 residues: Probable magnetosome protein Mms36 (347 aa).

A helical transmembrane segment spans residues 25-45 (VLVLYLAIAVVVAVLAWPWLA).

It is found in the magnetosome membrane. Functionally, the 4 genes of this operon collectively influence magnetosome size and number. This chain is Probable magnetosome protein Mms36, found in Magnetospirillum gryphiswaldense (strain DSM 6361 / JCM 21280 / NBRC 15271 / MSR-1).